The following is a 415-amino-acid chain: MNVLVIGAGGREHALAYKLNQSNLVKQVFVIPGNEAMTPIAEVHTEISESDHQGILDFAKQQNVDWVVIGPEQPLIDGLADILRANGFKVFGPNKQAAQIEGSKLFAKKIMEKYNIPTADYKEVERKKDALTYIENCEFPVVVKKDGLAAGKGVIIADTIEAARSAIEIMYGDEEEGTVVFETFLEGEEFSLMTFVNGELAVPFDCIAQDHKRAFDHDEGPNTGGMGAYCPVPHISDDVLKLTNETIAQPIAKAMLNEGYQFFGVLYIGAILTKDGPKVIEFNARFGDPEAQVLLSRMESDLMQHIIDLDEGKRTEFKWKNEAIVGVMLASKGYPDAYEKGHKVSGFDLNENYFVSGLKKQGDTFVTSGGRVILAIGKGDNVHDAQRDAYEKVSQIQSDHLFYRHDIANKALQLK.

Positions 108-311 (KKIMEKYNIP…LMQHIIDLDE (204 aa)) constitute an ATP-grasp domain. Residue 134-191 (IENCEFPVVVKKDGLAAGKGVIIADTIEAARSAIEIMYGDEEEGTVVFETFLEGEEFS) participates in ATP binding. The Mg(2+) site is built by Glu281 and Asn283.

This sequence belongs to the GARS family. The cofactor is Mg(2+). Mn(2+) serves as cofactor.

The catalysed reaction is 5-phospho-beta-D-ribosylamine + glycine + ATP = N(1)-(5-phospho-beta-D-ribosyl)glycinamide + ADP + phosphate + H(+). Its pathway is purine metabolism; IMP biosynthesis via de novo pathway; N(1)-(5-phospho-D-ribosyl)glycinamide from 5-phospho-alpha-D-ribose 1-diphosphate: step 2/2. In Staphylococcus aureus (strain MRSA252), this protein is Phosphoribosylamine--glycine ligase.